We begin with the raw amino-acid sequence, 357 residues long: Protein RecA (357 aa).

74-81 serves as a coordination point for ATP; it reads GPESSGKT.

Belongs to the RecA family.

It localises to the cytoplasm. Functionally, can catalyze the hydrolysis of ATP in the presence of single-stranded DNA, the ATP-dependent uptake of single-stranded DNA by duplex DNA, and the ATP-dependent hybridization of homologous single-stranded DNAs. It interacts with LexA causing its activation and leading to its autocatalytic cleavage. The chain is Protein RecA from Bordetella petrii (strain ATCC BAA-461 / DSM 12804 / CCUG 43448).